The sequence spans 112 residues: ATP synthase epsilon chain (112 aa).

This sequence belongs to the ATPase epsilon chain family. As to quaternary structure, F-type ATPases have 2 components, CF(1) - the catalytic core - and CF(0) - the membrane proton channel. CF(1) has five subunits: alpha(3), beta(3), gamma(1), delta(1), epsilon(1). CF(0) has three main subunits: a, b and c.

It is found in the cell membrane. Functionally, produces ATP from ADP in the presence of a proton gradient across the membrane. In Rickettsia africae (strain ESF-5), this protein is ATP synthase epsilon chain.